Reading from the N-terminus, the 438-residue chain is 26S proteasome regulatory subunit 7 homolog (438 aa).

The segment covering 1–15 has biased composition (basic and acidic residues); the sequence is MPPKEDWEKYQKPVD. Positions 1 to 31 are disordered; sequence MPPKEDWEKYQKPVDTEEENDKNPPPLDEGD. Residue Ser-90 is modified to Phosphoserine. 220–227 provides a ligand contact to ATP; it reads GPPGTGKT.

Belongs to the AAA ATPase family.

It localises to the cytoplasm. Its subcellular location is the nucleus. Its function is as follows. The 26S proteasome is involved in the ATP-dependent degradation of ubiquitinated proteins. The regulatory (or ATPase) complex confers ATP dependency and substrate specificity to the 26S complex. The protein is 26S proteasome regulatory subunit 7 homolog (rpt1) of Schizosaccharomyces pombe (strain 972 / ATCC 24843) (Fission yeast).